The chain runs to 209 residues: Ribosomal RNA large subunit methyltransferase E (209 aa).

Residues Gly63, Trp65, Asp83, Asp99, and Asp124 each contribute to the S-adenosyl-L-methionine site. Lys164 acts as the Proton acceptor in catalysis.

The protein belongs to the class I-like SAM-binding methyltransferase superfamily. RNA methyltransferase RlmE family.

It is found in the cytoplasm. The enzyme catalyses uridine(2552) in 23S rRNA + S-adenosyl-L-methionine = 2'-O-methyluridine(2552) in 23S rRNA + S-adenosyl-L-homocysteine + H(+). In terms of biological role, specifically methylates the uridine in position 2552 of 23S rRNA at the 2'-O position of the ribose in the fully assembled 50S ribosomal subunit. The sequence is that of Ribosomal RNA large subunit methyltransferase E from Vibrio atlanticus (strain LGP32) (Vibrio splendidus (strain Mel32)).